A 1769-amino-acid polypeptide reads, in one-letter code: Tight junction protein 1 (1769 aa).

Positions 23–110 constitute a PDZ 1 domain; that stretch reads TVTLHRAPGF…NAKITIRRKK (88 aa). A compositionally biased stretch (basic residues) spans 102 to 112; that stretch reads AKITIRRKKKV. The tract at residues 102–188 is disordered; that stretch reads AKITIRRKKK…QPPKPTKVTL (87 aa). Acidic residues predominate over residues 123 to 135; that stretch reads PVSENEDSYDEEV. Position 125 is a phosphoserine (Ser-125). Tyr-131 carries the phosphotyrosine modification. The segment covering 148-174 has biased composition (basic and acidic residues); that stretch reads RRSEKSWARDRSASRERSLSPRSDRRS. 3 positions are modified to phosphoserine: Ser-174, Ser-177, and Ser-178. Phosphothreonine is present on Thr-184. In terms of domain architecture, PDZ 2 spans 185 to 263; the sequence is KVTLVKSRKN…KLKMVVQRDE (79 aa). Ser-211 and Ser-240 each carry phosphoserine. Thr-266 carries the phosphothreonine modification. Ser-274, Ser-276, Ser-279, Ser-283, Ser-289, Ser-293, Ser-296, Ser-299, Ser-322, Ser-328, Ser-333, Ser-336, and Ser-352 each carry phosphoserine. The tract at residues 295-362 is disordered; the sequence is ASDHSGRSHD…TPVKHADDHT (68 aa). Residues 298 to 326 show a composition bias toward basic and acidic residues; sequence HSGRSHDRPPRHSRSRSPDQRSEPSDHSR. At Thr-353 the chain carries Phosphothreonine. Residues 420–501 enclose the PDZ 3 domain; it reads SMKLVKFRKG…GEEVTILAQK (82 aa). The 69-residue stretch at 515–583 folds into the SH3 domain; it reads GDSFYIRTHF…PNKNRAEQLA (69 aa). One can recognise a Guanylate kinase-like domain in the interval 609 to 790; sequence SKRNLRKSRE…WYGALKEAIQ (182 aa). Ser-616 and Ser-621 each carry phosphoserine. Residues 632 to 875 form an occludin (OCLN)-binding region region; the sequence is YERVVLREAG…GTPPESAITR (244 aa). Position 808 is a phosphothreonine (Thr-808). A phosphoserine mark is found at Ser-809 and Ser-820. The residue at position 821 (Tyr-821) is a Phosphotyrosine. 3 positions are modified to phosphoserine: Ser-823, Ser-827, and Ser-836. 2 disordered regions span residues 824–976 and 1010–1067; these read APGS…LRTP and EMMR…SYTD. A phosphothreonine mark is found at Thr-845, Thr-847, Thr-853, Thr-860, and Thr-867. Over residues 878-891 the composition is skewed to basic and acidic residues; the sequence is EPVREDSSGMHHEN. Positions 892–905 are enriched in low complexity; that stretch reads QTYPPYSPQAQPQP. The residue at position 911 (Ser-911) is a Phosphoserine. 2 stretches are compositionally biased toward polar residues: residues 933–952 and 962–976; these read PETN…TLTN and PSTS…LRTP. Ser-967 bears the Phosphoserine mark. The residue at position 1070 (Ser-1070) is a Phosphoserine. 3 disordered regions span residues 1091–1212, 1224–1261, and 1273–1589; these read SYYD…KAGH, PLIP…MKPQ, and KRSA…EFDS. The segment covering 1108–1124 has biased composition (basic and acidic residues); that stretch reads QHPRDLDSRQHPEESSE. Position 1138 is a phosphoserine (Ser-1138). Residues Tyr-1139 and Tyr-1164 each carry the phosphotyrosine modification. The actin-binding region (ABR) stretch occupies residues 1150–1370; it reads RTSTLRHEEQ…FDRRSFENKP (221 aa). Basic and acidic residues predominate over residues 1273–1286; that stretch reads KRSASLENKKDENH. Residues 1300-1310 show a composition bias toward pro residues; that stretch reads PGAPIIGPKPT. Residues 1335 to 1346 show a composition bias toward basic and acidic residues; that stretch reads PPEDIVRSNHYD. At Tyr-1353 the chain carries Phosphotyrosine. Ser-1365 is modified (phosphoserine). Residues 1387–1401 show a composition bias toward polar residues; that stretch reads HSQNQTNFSSYSSKG. The segment covering 1402–1419 has biased composition (basic and acidic residues); it reads KSPEADAPDRSFGEKRYE. At Ser-1412 the chain carries Phosphoserine. Composition is skewed to polar residues over residues 1460 to 1471 and 1514 to 1523; these read NSISLDFQNSLV and AEQTQKTVTP. Basic and acidic residues predominate over residues 1539 to 1548; it reads PFERKFESPK. Ser-1546 and Ser-1618 each carry phosphoserine. Positions 1635-1769 constitute a ZU5 domain; that stretch reads ATARGVFNNN…NCVSVLIDHF (135 aa).

It belongs to the MAGUK family. Homodimer. Forms heterodimers TJP3. Forms a heterodimer (via PDZ2 domain) with TJP2/ZO2 (via PDZ2 domain). Interacts with OCLN. Interacts with CALM, claudins, CGN/cingulin, CXADR, GJA12, GJD3 and UBN1. Interacts (via ZU5 domain) with CDC42BPB and MYZAP. Interacts (via PDZ domain) with GJA1. Interacts (via PDZ domains) with ANKRD2. Interacts with POPDC1 (via the C-terminus cytoplasmic tail). Interacts with HSPA4. Interacts with KIRREL1. Interacts with DLL1. Interacts with USP53 (via the C-terminal region). Interacts with DNMBP (via C-terminal domain); required for the apical cell-cell junction localization of DNMBP. Interacts with SPEF1. Interacts (via N-terminus) with CTNNA1. Interacts with CLDN18. Interacts with CLDN16 (via TRV motif); this is a prerequisite for anchoring of CLDN16 at the tight junction. Interacts with PKP1; the interaction facilitates TJP1/ZO-1 localization to the plasma membrane. Interacts with PATJ (via PDZ1-6 domains); the interaction is required for attachment and extension of TJP1/ZO1 condensates along the apical cell interface. In terms of processing, phosphorylated at tyrosine redidues in response to epidermal growth factor (EGF). This response is dependent on an intact actin microfilament system. Dephosphorylated by PTPRJ.

The protein resides in the cell membrane. It is found in the cell junction. It localises to the tight junction. The protein localises to the gap junction. In terms of biological role, TJP1, TJP2, and TJP3 are closely related scaffolding proteins that link tight junction (TJ) transmembrane proteins such as claudins, junctional adhesion molecules, and occludin to the actin cytoskeleton. Forms a multistranded TJP1/ZO1 condensate which elongates to form a tight junction belt, the belt is anchored at the apical cell membrane via interaction with PATJ. The tight junction acts to limit movement of substances through the paracellular space and as a boundary between the compositionally distinct apical and basolateral plasma membrane domains of epithelial and endothelial cells. Necessary for lumenogenesis, and particularly efficient epithelial polarization and barrier formation. Plays a role in the regulation of cell migration by targeting CDC42BPBb to the leading edge of migrating cells. With TJP2 and TJP3, participates in the junctional retention and stability of the transcription factor DBPA, but is not involved in its shuttling to the nucleus. May play a role in mediating cell morphology changes during ameloblast differentiation via its role in tight junctions. The chain is Tight junction protein 1 from Canis lupus familiaris (Dog).